A 416-amino-acid polypeptide reads, in one-letter code: Chaperone protein dnaJ A6 (416 aa).

The region spanning 12–73 (KYYEVLGVPK…EKRDIYDQYG (62 aa)) is the J domain. The CR-type zinc-finger motif lies at 133–217 (GSMKKLSLSR…CRASKVIQEK (85 aa)). Zn(2+) contacts are provided by Cys146, Cys149, Cys162, Cys165, Cys189, Cys192, Cys205, and Cys208. CXXCXGXG motif repeat units lie at residues 146–153 (CPKCKGKG), 162–169 (CYGCHGVG), and 189–196 (CPECRGSG). The span at 380 to 399 (HDVNIEEEMRRKQYQRKQEA) shows a compositional bias: basic and acidic residues. The disordered stretch occupies residues 380–416 (HDVNIEEEMRRKQYQRKQEAYDEDEEEDAPRVQCAQQ).

This sequence belongs to the DnaJ family. In terms of assembly, interacts with ZFP1.

It localises to the nucleus. Its subcellular location is the cytoplasm. In terms of biological role, involved in disease resistance. Acts as a negative regulator of innate immunity to the rice blast fungus (Magnaporthe oryzae). Acts as a negative regulator of the pathogen-associated molecular pattern (PAMP)-triggered immunity (PTI) response through the inhibition of reactive oxygen species (ROS) accumulation and expression of defense-related genes. May function via the ubiquitin-proteasome degradation pathway. In Oryza sativa subsp. japonica (Rice), this protein is Chaperone protein dnaJ A6.